The sequence spans 1231 residues: S-layer protein A (1231 aa).

The signal sequence occupies residues 1–35; it reads MNKTLGLILTSVFLLSTLGIITGFVIPTQAANSND.

Belongs to the Sulfolobales SlaA family. The mushroom-shaped unit cells of the Sulfolobales' S-layers may consist of three SlaB subunits and six SlaA subunits.

The protein localises to the secreted. It localises to the cell wall. Its subcellular location is the S-layer. In terms of biological role, S-layer large protein. May form the highly ordered outer sheath. This is S-layer protein A from Saccharolobus solfataricus (strain ATCC 35092 / DSM 1617 / JCM 11322 / P2) (Sulfolobus solfataricus).